The sequence spans 244 residues: Phosphoadenosine 5'-phosphosulfate reductase (244 aa).

C239 functions as the Nucleophile; cysteine thiosulfonate intermediate in the catalytic mechanism.

Belongs to the PAPS reductase family. CysH subfamily.

Its subcellular location is the cytoplasm. The enzyme catalyses [thioredoxin]-disulfide + sulfite + adenosine 3',5'-bisphosphate + 2 H(+) = [thioredoxin]-dithiol + 3'-phosphoadenylyl sulfate. It functions in the pathway sulfur metabolism; hydrogen sulfide biosynthesis; sulfite from sulfate: step 3/3. Its function is as follows. Catalyzes the formation of sulfite from phosphoadenosine 5'-phosphosulfate (PAPS) using thioredoxin as an electron donor. The polypeptide is Phosphoadenosine 5'-phosphosulfate reductase (Salmonella agona (strain SL483)).